Here is a 680-residue protein sequence, read N- to C-terminus: DNA-directed RNA polymerase subunit beta' (680 aa).

Positions 69, 71, 87, and 90 each coordinate Zn(2+). Mg(2+) contacts are provided by aspartate 489, aspartate 491, and aspartate 493.

This sequence belongs to the RNA polymerase beta' chain family. RpoC1 subfamily. As to quaternary structure, in plastids the minimal PEP RNA polymerase catalytic core is composed of four subunits: alpha, beta, beta', and beta''. When a (nuclear-encoded) sigma factor is associated with the core the holoenzyme is formed, which can initiate transcription. Mg(2+) serves as cofactor. The cofactor is Zn(2+).

It localises to the plastid. Its subcellular location is the chloroplast. It carries out the reaction RNA(n) + a ribonucleoside 5'-triphosphate = RNA(n+1) + diphosphate. Functionally, DNA-dependent RNA polymerase catalyzes the transcription of DNA into RNA using the four ribonucleoside triphosphates as substrates. This Olimarabidopsis pumila (Dwarf rocket) protein is DNA-directed RNA polymerase subunit beta'.